Here is a 181-residue protein sequence, read N- to C-terminus: 6,7-dimethyl-8-ribityllumazine synthase (181 aa).

Residues Tyr30, 61–63, and 87–89 each bind 5-amino-6-(D-ribitylamino)uracil; these read ALE and CII. 92–93 is a (2S)-2-hydroxy-3-oxobutyl phosphate binding site; that stretch reads ET. Catalysis depends on His95, which acts as the Proton donor. Asn120 serves as a coordination point for 5-amino-6-(D-ribitylamino)uracil. Arg134 provides a ligand contact to (2S)-2-hydroxy-3-oxobutyl phosphate.

This sequence belongs to the DMRL synthase family.

The enzyme catalyses (2S)-2-hydroxy-3-oxobutyl phosphate + 5-amino-6-(D-ribitylamino)uracil = 6,7-dimethyl-8-(1-D-ribityl)lumazine + phosphate + 2 H2O + H(+). It participates in cofactor biosynthesis; riboflavin biosynthesis; riboflavin from 2-hydroxy-3-oxobutyl phosphate and 5-amino-6-(D-ribitylamino)uracil: step 1/2. In terms of biological role, catalyzes the formation of 6,7-dimethyl-8-ribityllumazine by condensation of 5-amino-6-(D-ribitylamino)uracil with 3,4-dihydroxy-2-butanone 4-phosphate. This is the penultimate step in the biosynthesis of riboflavin. This chain is 6,7-dimethyl-8-ribityllumazine synthase, found in Beijerinckia indica subsp. indica (strain ATCC 9039 / DSM 1715 / NCIMB 8712).